A 273-amino-acid polypeptide reads, in one-letter code: 2,3,4,5-tetrahydropyridine-2,6-dicarboxylate N-succinyltransferase (273 aa).

Substrate-binding residues include R104 and D141.

Belongs to the transferase hexapeptide repeat family. In terms of assembly, homotrimer.

It is found in the cytoplasm. The catalysed reaction is (S)-2,3,4,5-tetrahydrodipicolinate + succinyl-CoA + H2O = (S)-2-succinylamino-6-oxoheptanedioate + CoA. It functions in the pathway amino-acid biosynthesis; L-lysine biosynthesis via DAP pathway; LL-2,6-diaminopimelate from (S)-tetrahydrodipicolinate (succinylase route): step 1/3. The sequence is that of 2,3,4,5-tetrahydropyridine-2,6-dicarboxylate N-succinyltransferase from Chromobacterium violaceum (strain ATCC 12472 / DSM 30191 / JCM 1249 / CCUG 213 / NBRC 12614 / NCIMB 9131 / NCTC 9757 / MK).